Reading from the N-terminus, the 483-residue chain is S-adenosylhomocysteine hydrolase-like protein 1 (483 aa).

The segment at 1–56 is disordered; that stretch reads MQEFTKFPTKTGRRSLSRSISQSSTDSYSSAASYTDSSDDEVSPREKQQTNSKGSS. Over residues 17 to 36 the composition is skewed to low complexity; sequence SRSISQSSTDSYSSAASYTD. The tract at residues 18–45 is PEST; sequence RSISQSSTDSYSSAASYTDSSDDEVSPR. Phosphoserine; by PKD is present on serine 21. Serine 24, serine 27, serine 30, and serine 37 each carry phosphoserine. The tract at residues 91-154 is interaction with BCL2L10; the sequence is QGEKPLAGAK…EAGVAVFAWK (64 aa). Residues threonine 108, aspartate 182, glutamate 207, lysine 237, and aspartate 241 each coordinate substrate. An NAD binding region spans residues 234–401; it reads SVTKQKFDNL…EGRLLNLSCS (168 aa). Residues 271-275, glutamate 294, and asparagine 329 each bind NAD(+); that span reads GYGEV. At serine 344 the chain carries Phosphoserine. Residue 350–352 participates in NAD(+) binding; that stretch reads MGH. The PDZ-binding stretch occupies residues 473 to 483; the sequence is NGPFKPNYYRY.

Belongs to the adenosylhomocysteinase family. Forms multimers. Forms heteromultimers with AHCYL2 (via the C-terminal region). Interacts (when phosphorylated) with ITPR1 (when not phosphorylated); the interaction suppresses inositol 1,4,5-trisphosphate binding to ITPR1. Interacts with BCL2L10; this strengthens the interaction of AHCYL1 with ITPR1. Interacts with CFTR and SLC26A6; the interactions take place once AHCYL1 is released from ITPR1 and increase CFTR and SLC26A6 activities. Interacts with RRM1; in a phosphorylation- and (dATP)-dependent manner. Interacts (via PEST domain when phosphorylated) with SLC4A4 isoform 1 but not isoform 2; the interaction increases SLC4A4 isoform 1 activity. Interacts (when phosphorylated) with SLC9A3; the interaction is required for SLC9A3 apical location and activity. Interacts (when phosphorylated) with FIP1L1; the interaction is direct and associates AHCYL1 with the CPSF complex and RNA. Interacts with PAPOLA. Interacts with ZCCHC4. Interacts with AHCY. It depends on NAD(+) as a cofactor. Phosphorylated at Ser/Thr residues between Ser-21 and Thr-25 in the PEST region: required for interaction with dATP-bound RRM1 and ITPR1. Phosphorylation at Ser-21 by PRKD1 and CAMK4 is required for further phosphorylations by CSNK1A1. Phosphorylation is induced by oxidative stress. Probably phosphorylated by CAMK2A; phosphorylation at Ser-21 may be required for interaction with SLC9A3. Dephosphorylated in response to apoptotic stress conditions which causes translocation of both AHCYL1 and BCL2L10 from mitochondria-associated endoplasmic reticulum membranes and promotes apoptosis. As to expression, expressed in kidney proximal tubules and outer medulla (at protein level).

The protein localises to the endoplasmic reticulum. It is found in the cytoplasm. The protein resides in the cytosol. Its subcellular location is the apical cell membrane. It localises to the microsome. Its function is as follows. Multifaceted cellular regulator which coordinates several essential cellular functions including regulation of epithelial HCO3(-) and fluid secretion, mRNA processing and DNA replication. Regulates ITPR1 sensitivity to inositol 1,4,5-trisphosphate, competing for the common binding site and acting as endogenous 'pseudoligand' whose inhibitory activity can be modulated by its phosphorylation status. Promotes the formation of contact points between the endoplasmic reticulum (ER) and mitochondria, facilitating transfer of Ca(2+) from the ER to mitochondria. Under normal cellular conditions, functions cooperatively with BCL2L10 to limit ITPR1-mediated Ca(2+) release but, under apoptotic stress conditions, dephosphorylated which promotes dissociation of both AHCYL1 and BCL2L10 from mitochondria-associated endoplasmic reticulum membranes, inhibits BCL2L10 interaction with ITPR1 and leads to increased Ca(2+) transfer to mitochondria which promotes apoptosis. In the pancreatic and salivary ducts, at resting state, attenuates inositol 1,4,5-trisphosphate-induced calcium release by interacting with ITPR1. When extracellular stimuli induce ITPR1 phosphorylation or inositol 1,4,5-trisphosphate production, dissociates from ITPR1 to interact with CFTR and SLC26A6, mediating their synergistic activation by calcium and cAMP that stimulates the epithelial secretion of electrolytes and fluid. Also activates basolateral SLC4A4 isoform 1 to coordinate fluid and HCO3(-) secretion. Inhibits the effect of STK39 on SLC4A4 and CFTR by recruiting PP1 phosphatase which activates SLC4A4, SLC26A6 and CFTR through dephosphorylation. Mediates the induction of SLC9A3 surface expression produced by Angiotensin-2. Depending on the cell type, activates SLC9A3 in response to calcium or reverses SLC9A3R2-dependent calcium inhibition. May modulate the polyadenylation state of specific mRNAs, both by controlling the subcellular location of FIP1L1 and by inhibiting PAPOLA activity, in response to a stimulus that alters its phosphorylation state. Acts as a (dATP)-dependent inhibitor of ribonucleotide reductase large subunit RRM1, controlling the endogenous dNTP pool and ensuring normal cell cycle progression. In vitro does not exhibit any S-adenosyl-L-homocysteine hydrolase activity. The protein is S-adenosylhomocysteine hydrolase-like protein 1 of Rattus norvegicus (Rat).